The chain runs to 92 residues: Signal recognition particle 19 kDa protein (92 aa).

This sequence belongs to the SRP19 family. As to quaternary structure, part of the signal recognition particle protein translocation system, which is composed of SRP and FtsY. Archaeal SRP consists of a 7S RNA molecule of 300 nucleotides and two protein subunits: SRP54 and SRP19.

It localises to the cytoplasm. Its function is as follows. Involved in targeting and insertion of nascent membrane proteins into the cytoplasmic membrane. Binds directly to 7S RNA and mediates binding of the 54 kDa subunit of the SRP. The protein is Signal recognition particle 19 kDa protein of Haloferax volcanii (strain ATCC 29605 / DSM 3757 / JCM 8879 / NBRC 14742 / NCIMB 2012 / VKM B-1768 / DS2) (Halobacterium volcanii).